The primary structure comprises 323 residues: Aquaporin-4 (323 aa).

The Cytoplasmic segment spans residues 1 to 36; the sequence is MSDGAAARRWGKCGHSCSRESIMVAFKGVWTQAFWK. S-palmitoyl cysteine attachment occurs at residues cysteine 13 and cysteine 17. Residues 37–57 traverse the membrane as a helical segment; the sequence is AVSAEFLATLIFVLLGVGSTI. The Extracellular portion of the chain corresponds to 58-69; the sequence is NWGGSENPLPVD. The chain crosses the membrane as a helical span at residues 70–89; it reads MVLISLCFGLSIATMVQCFG. At 90–93 the chain is on the cytoplasmic side; it reads HISG. Residues 94 to 101 constitute an intramembrane region (discontinuously helical); sequence GHINPAVT. An NPA 1 motif is present at residues 97–99; the sequence is NPA. The Cytoplasmic portion of the chain corresponds to 102-115; sequence VAMVCTRKISIAKS. Serine 111 is modified (phosphoserine; by PKG). A helical membrane pass occupies residues 116 to 136; sequence VFYIIAQCLGAIIGAGILYLV. Over 137–155 the chain is Extracellular; sequence TPPSVVGGLGVTTVHGNLT. Asparagine 153 carries N-linked (GlcNAc...) asparagine glycosylation. A helical transmembrane segment spans residues 156–176; it reads AGHGLLVELIITFQLVFTIFA. Topologically, residues 177–184 are cytoplasmic; sequence SCDSKRTD. The residue at position 180 (serine 180) is a Phosphoserine; by PKC. A helical membrane pass occupies residues 185–205; the sequence is VTGSIALAIGFSVAIGHLFAI. The N-linked (GlcNAc...) asparagine glycan is linked to asparagine 206. The Extracellular segment spans residues 206 to 208; the sequence is NYT. The discontinuously helical intramembrane region spans 209 to 222; sequence GASMNPARSFGPAV. The NPA 2 motif lies at 213 to 215; it reads NPA. Over 223–231 the chain is Extracellular; the sequence is IMGNWANHW. A helical membrane pass occupies residues 232 to 252; the sequence is IYWVGPIMGAVLAGALYEYVF. The Cytoplasmic portion of the chain corresponds to 253–323; it reads CPDVELKRRL…DSSGEVLSSV (71 aa). A phosphoserine mark is found at serine 276 and serine 285. Threonine 289 bears the Phosphothreonine mark. Serine 321 bears the Phosphoserine mark.

Belongs to the MIP/aquaporin (TC 1.A.8) family. As to quaternary structure, homotetramer. The tetramers can form oligomeric arrays in membranes. The size of the oligomers differs between tissues and is smaller in skeletal muscle than in brain. Interaction between AQP4 oligomeric arrays in close-by cells can contribute to cell-cell adhesion. Part of a complex containing MLC1, TRPV4, HEPACAM and ATP1B1. Phosphorylation by PKC at Ser-180 reduces conductance by 50%. Phosphorylation by PKG at Ser-111 in response to glutamate increases conductance by 40%; this increase is not due to increased presence at the cell membrane. Post-translationally, isoform 2: Palmitoylated on its N-terminal region. Isoform 1: Not palmitoylated. In terms of tissue distribution, detected in brain cortex, especially around cortical blood vessels, and subjacent to pia, with lower levels in parenchymal membranes. Detected in ependymal and astroglial cells in brain. Detected in supporting Hensen's cells, inner sulcus cells and Claudius cells in the inner ear. Detected in skeletal muscle. Detected in gastric parietal cells. Detected in principal cells in collecting ducts in kidney medulla (at protein level). Detected in brain, heart and skeletal muscle.

It localises to the cell membrane. The protein localises to the basolateral cell membrane. Its subcellular location is the endosome membrane. The protein resides in the sarcolemma. It is found in the cell projection. It catalyses the reaction H2O(in) = H2O(out). Forms a water-specific channel. Plays an important role in brain water homeostasis and in glymphatic solute transport. Required for a normal rate of water exchange across the blood brain interface. Required for normal levels of cerebrospinal fluid influx into the brain cortex and parenchyma along paravascular spaces that surround penetrating arteries, and for normal drainage of interstitial fluid along paravenous drainage pathways. Thereby, it is required for normal clearance of solutes from the brain interstitial fluid, including soluble beta-amyloid peptides derived from APP. Plays a redundant role in urinary water homeostasis and urinary concentrating ability. This is Aquaporin-4 (Aqp4) from Mus musculus (Mouse).